Consider the following 205-residue polypeptide: Small ribosomal subunit protein uS5 (205 aa).

Positions 49 to 112 constitute an S5 DRBM domain; it reads LVDEVLDINM…VSAKINLVKV (64 aa).

It belongs to the universal ribosomal protein uS5 family. As to quaternary structure, part of the 30S ribosomal subunit. Contacts protein S4.

Functionally, with S4 and S12 plays an important role in translational accuracy. The polypeptide is Small ribosomal subunit protein uS5 (Methanospirillum hungatei JF-1 (strain ATCC 27890 / DSM 864 / NBRC 100397 / JF-1)).